The following is a 586-amino-acid chain: MPKPINVRVTTMDAELEFAIQPNTTGKQLFDQVVKTIGLREVWYFGLQYVDNKGFPTWLKLDKKVSAQEVRKENPVQFKFRAKFYPEDVAEELIQDITQKLFFLQVKDGILSDEIYCPPETAVLLGSYAVQAKFGDYNKEMHKSGYLSSERLIPQRVMDQHKLSRDQWEDRIQVWHAEHRGMLKDSAMLEYLKIAQDLEMYGINYFEIKNKKGTDLWLGVDALGLNIYEKDDKLTPKIGFPWSEIRNISFNDKKFVIKPIDKKAPDFVFYAPRLRINKRILQLCMGNHELYMRRRKPDTIEVQQMKAQAREEKHQKQLERQQLETEKKRRETVEREKEQMLREKEELMLRLQDYEQKTKRAEKELSEQIEKALQLEEERRRAQEEAERLEADRMAALRAKEELERQAQDQIKSQEQLAAELAEYTAKIALLEEARRRKEDEVEEWQHRAKEAQDDLVKTKEELHLVMTAPPPPPPPVYEPVNYHVQEGLQDEGAEPMGYSAELSSEGILDDRNEEKRITEAEKNERVQRQLLTLSNELSQARDENKRTHNDIIHNENMRQGRDKYKTLRQIRQGNTKQRIDEFEAM.

The FERM domain occupies 2 to 295; the sequence is PKPINVRVTT…GNHELYMRRR (294 aa). An N6-acetyllysine modification is found at Lys-60. The short motif at 115–120 is the [IL]-x-C-x-x-[DE] motif element; the sequence is IYCPPE. Residue Tyr-146 is modified to Phosphotyrosine; by PDGFR. Positions 244–586 are interaction with SCYL3; it reads EIRNISFNDK…KQRIDEFEAM (343 aa). Residues 302 to 462 adopt a coiled-coil conformation; the sequence is VQQMKAQARE…QDDLVKTKEE (161 aa). Positions 306–338 are disordered; the sequence is KAQAREEKHQKQLERQQLETEKKRRETVEREKE. Positions 308-338 are enriched in basic and acidic residues; sequence QAREEKHQKQLERQQLETEKKRRETVEREKE. Position 354 is a phosphotyrosine; by PDGFR (Tyr-354). At Ser-366 the chain carries Phosphoserine. Position 478 is a phosphotyrosine (Tyr-478). The segment at 534–565 is disordered; sequence LSNELSQARDENKRTHNDIIHNENMRQGRDKY. Ser-535 is modified (phosphoserine). Over residues 540–565 the composition is skewed to basic and acidic residues; sequence QARDENKRTHNDIIHNENMRQGRDKY. Thr-567 is modified (phosphothreonine; by ROCK2 and PKC/PRKCI).

As to quaternary structure, interacts with PALS1 and NHERF2. Found in a complex with EZR, PODXL and NHERF2. Interacts with MCC, PLEKHG6, PODXL, SCYL3/PACE1, NHERF1 and TMEM8B. Interacts (when phosphorylated) with FES/FPS. Interacts with dimeric S100P, the interaction may be activating through unmasking of F-actin binding sites. Identified in complexes that contain VIM, EZR, AHNAK, BFSP1, BFSP2, ANK2, PLEC, PRX and spectrin. Detected in a complex composed of at least EZR, AHNAK, PPL and PRX. Interacts with PDPN (via cytoplasmic domain); activates RHOA and promotes epithelial-mesenchymal transition. Interacts with SPN/CD43 cytoplasmic tail. Interacts with CD44 and ICAM2. Interacts with SLC9A3; interaction targets SLC9A3 to the apical membrane. Interacts with SLC9A1; regulates interactions of SLC9A1 with cytoskeletal and promotes stress fiber formation. Interacts with CLIC5; may work together in a complex which also includes RDX and MYO6 to stabilize linkages between the plasma membrane and subjacent actin cytoskeleton at the base of stereocilia. Phosphorylated by tyrosine-protein kinases. Phosphorylation by ROCK2 suppresses the head-to-tail association of the N-terminal and C-terminal halves resulting in an opened conformation which is capable of actin and membrane-binding. Post-translationally, S-nitrosylation is induced by interferon-gamma and oxidatively-modified low-densitity lipoprotein (LDL(ox)) possibly implicating the iNOS-S100A8/9 transnitrosylase complex. In terms of tissue distribution, detected in eye lens fiber cells. Expressed in cerebrum and cerebellum (at protein level). Component of the microvilli of intestinal epithelial cells.

The protein resides in the apical cell membrane. It is found in the cell projection. The protein localises to the microvillus membrane. Its subcellular location is the ruffle membrane. It localises to the cytoplasm. The protein resides in the cell cortex. It is found in the cytoskeleton. The protein localises to the microvillus. Its activity is regulated as follows. A head-to-tail association, of the N-terminal and C-terminal halves results in a closed conformation (inactive form) which is incapable of actin or membrane-binding. In terms of biological role, probably involved in connections of major cytoskeletal structures to the plasma membrane. In epithelial cells, required for the formation of microvilli and membrane ruffles on the apical pole. Along with PLEKHG6, required for normal macropinocytosis. The sequence is that of Ezrin (Ezr) from Mus musculus (Mouse).